Reading from the N-terminus, the 276-residue chain is UDP-3-O-acyl-N-acetylglucosamine deacetylase (276 aa).

Positions 76, 234, and 238 each coordinate Zn(2+). H261 (proton donor) is an active-site residue.

Belongs to the LpxC family. The cofactor is Zn(2+).

The enzyme catalyses a UDP-3-O-[(3R)-3-hydroxyacyl]-N-acetyl-alpha-D-glucosamine + H2O = a UDP-3-O-[(3R)-3-hydroxyacyl]-alpha-D-glucosamine + acetate. It participates in glycolipid biosynthesis; lipid IV(A) biosynthesis; lipid IV(A) from (3R)-3-hydroxytetradecanoyl-[acyl-carrier-protein] and UDP-N-acetyl-alpha-D-glucosamine: step 2/6. Catalyzes the hydrolysis of UDP-3-O-myristoyl-N-acetylglucosamine to form UDP-3-O-myristoylglucosamine and acetate, the committed step in lipid A biosynthesis. The protein is UDP-3-O-acyl-N-acetylglucosamine deacetylase of Synechocystis sp. (strain ATCC 27184 / PCC 6803 / Kazusa).